Consider the following 211-residue polypeptide: Uridine kinase (211 aa).

ATP is bound at residue 12–19 (GGSGSGKT).

The protein belongs to the uridine kinase family.

Its subcellular location is the cytoplasm. The enzyme catalyses uridine + ATP = UMP + ADP + H(+). It catalyses the reaction cytidine + ATP = CMP + ADP + H(+). The protein operates within pyrimidine metabolism; CTP biosynthesis via salvage pathway; CTP from cytidine: step 1/3. Its pathway is pyrimidine metabolism; UMP biosynthesis via salvage pathway; UMP from uridine: step 1/1. This is Uridine kinase from Bacillus licheniformis (strain ATCC 14580 / DSM 13 / JCM 2505 / CCUG 7422 / NBRC 12200 / NCIMB 9375 / NCTC 10341 / NRRL NRS-1264 / Gibson 46).